The following is a 185-amino-acid chain: ATP synthase subunit b 1 (185 aa).

A helical transmembrane segment spans residues 4–24 (TLAIALTLATTSPAFAAGGGW).

It belongs to the ATPase B chain family. In terms of assembly, F-type ATPases have 2 components, F(1) - the catalytic core - and F(0) - the membrane proton channel. F(1) has five subunits: alpha(3), beta(3), gamma(1), delta(1), epsilon(1). F(0) has three main subunits: a(1), b(2) and c(10-14). The alpha and beta chains form an alternating ring which encloses part of the gamma chain. F(1) is attached to F(0) by a central stalk formed by the gamma and epsilon chains, while a peripheral stalk is formed by the delta and b chains.

Its subcellular location is the cell inner membrane. Functionally, f(1)F(0) ATP synthase produces ATP from ADP in the presence of a proton or sodium gradient. F-type ATPases consist of two structural domains, F(1) containing the extramembraneous catalytic core and F(0) containing the membrane proton channel, linked together by a central stalk and a peripheral stalk. During catalysis, ATP synthesis in the catalytic domain of F(1) is coupled via a rotary mechanism of the central stalk subunits to proton translocation. Component of the F(0) channel, it forms part of the peripheral stalk, linking F(1) to F(0). The chain is ATP synthase subunit b 1 from Ruegeria sp. (strain TM1040) (Silicibacter sp.).